Consider the following 80-residue polypeptide: Cell division activator CedA (80 aa).

It belongs to the CedA family.

In terms of biological role, activates the cell division inhibited by chromosomal DNA over-replication. The sequence is that of Cell division activator CedA from Citrobacter koseri (strain ATCC BAA-895 / CDC 4225-83 / SGSC4696).